Here is a 116-residue protein sequence, read N- to C-terminus: Large ribosomal subunit protein bL17 (116 aa).

It belongs to the bacterial ribosomal protein bL17 family. In terms of assembly, part of the 50S ribosomal subunit. Contacts protein L32.

The polypeptide is Large ribosomal subunit protein bL17 (Chloroflexus aurantiacus (strain ATCC 29366 / DSM 635 / J-10-fl)).